We begin with the raw amino-acid sequence, 468 residues long: Uronate isomerase (468 aa).

This sequence belongs to the metallo-dependent hydrolases superfamily. Uronate isomerase family.

The enzyme catalyses D-glucuronate = D-fructuronate. It carries out the reaction aldehydo-D-galacturonate = keto-D-tagaturonate. The protein operates within carbohydrate metabolism; pentose and glucuronate interconversion. In Bacteroides thetaiotaomicron (strain ATCC 29148 / DSM 2079 / JCM 5827 / CCUG 10774 / NCTC 10582 / VPI-5482 / E50), this protein is Uronate isomerase.